Here is an 805-residue protein sequence, read N- to C-terminus: Transcription factor SFL1 (805 aa).

Residues 1-24 show a composition bias toward low complexity; sequence MSHLVSSSLGTTTTATPTSRSPHT. The tract at residues 1–110 is disordered; that stretch reads MSHLVSSSLG…NNNVSNNNST (110 aa). Residues 25 to 69 are compositionally biased toward polar residues; it reads NHSTPYNQNSITSNRSSPVPKNSVNSRIIPQTMNPPIDMKSNNIL. A compositionally biased stretch (basic and acidic residues) spans 71–85; the sequence is PEKDTDTSRGDHSES. Residues 86–110 show a composition bias toward low complexity; the sequence is KASSISSASGTTTTNNNNVSNNNST. Residues 117-226 mediate DNA binding; sequence FIHKLYDMLH…LKNIKRRSSK (110 aa). 5 disordered regions span residues 273–336, 438–483, 513–675, 691–746, and 759–805; these read MQSP…NQSP, QSNF…VAPQ, REDS…PAPQ, HQKS…SENH, and VSEL…RKLE. The segment covering 295–310 has biased composition (low complexity); it reads QQQQQQQQQQQQQQQQ. Composition is skewed to polar residues over residues 454–480 and 533–556; these read HGNSVSSNYHLESTNVSRNPSTTNLNV and PSRNSSRILIEESTPTHPPTNFNP. A compositionally biased stretch (low complexity) spans 557–566; it reads QQSQSQSQVQ. Composition is skewed to polar residues over residues 581 to 597, 604 to 614, and 622 to 635; these read ESTYSPLSHSSNKSQIL, VNHSPLVQQQQ, and NDSSVAPPSQSSLP. Over residues 637-659 the composition is skewed to low complexity; that stretch reads TRPLSRQQQQQQQTLHHPSTTSS. Residues 716 to 738 show a composition bias toward polar residues; that stretch reads PISSTAPTTMITSTSKPTSTSGA.

It belongs to the HSF family.

It is found in the nucleus. In terms of biological role, transcription factor that plays a role of repressor of filamentous growth and flocculation. Antagonizes functions of SFL2 and FLO8. Plays a role in the hyphal repression induced by secreted factors like dodecanol by competitors such as Pseudomonas aeruginosa and Burkholderia cenocepacia. In Candida albicans (strain SC5314 / ATCC MYA-2876) (Yeast), this protein is Transcription factor SFL1 (SFL1).